We begin with the raw amino-acid sequence, 512 residues long: Respiratory nitrate reductase 1 beta chain (512 aa).

4Fe-4S ferredoxin-type domains are found at residues Val7–Gly35, Thr175–Glu206, and Gly208–Lys237. [4Fe-4S] cluster-binding residues include Cys16, Cys19, Cys22, Cys26, Cys184, Cys187, and Cys192. [3Fe-4S] cluster-binding residues include Cys196, Cys217, and Cys223. [4Fe-4S] cluster is bound by residues Cys227, Cys244, Cys247, Cys259, and Cys263.

In terms of assembly, dimer of heterotrimers each composed of an alpha, a beta and a gamma chain. Alpha and beta are catalytic chains; gamma chains are involved in binding the enzyme complex to the cytoplasmic membrane. It depends on [4Fe-4S] cluster as a cofactor. Requires [3Fe-4S] cluster as cofactor.

It localises to the cell membrane. It catalyses the reaction nitrate + a quinol = a quinone + nitrite + H2O. In terms of biological role, the nitrate reductase enzyme complex allows S.flexneri to use nitrate as an electron acceptor during anaerobic growth. The beta chain is an electron transfer unit containing four cysteine clusters involved in the formation of iron-sulfur centers. Electrons are transferred from the gamma chain to the molybdenum cofactor of the alpha subunit. The chain is Respiratory nitrate reductase 1 beta chain (narH) from Shigella flexneri.